A 176-amino-acid chain; its full sequence is Disulfide bond formation protein B (176 aa).

Over 1 to 14 the chain is Cytoplasmic; it reads MLRFLNQCSHGRGA. A helical transmembrane segment spans residues 15–31; it reads WLLMAFTALALELTALW. At 32–49 the chain is on the periplasmic side; the sequence is FQHVMLLKPCVLCIYERC. C41 and C44 form a disulfide bridge. Residues 50-65 form a helical membrane-spanning segment; sequence ALFGVLGAALIGAIAP. Residues 66 to 71 are Cytoplasmic-facing; the sequence is KTPLRY. A helical transmembrane segment spans residues 72 to 89; it reads VAMVIWLYSAFRGVQLTY. Residues 90 to 144 are Periplasmic-facing; that stretch reads EHTMLQLYPSPFATCDFMARFPEWLPLDKWVPQVFVASGDCAERQWEFLGLEMPQ. Cysteines 104 and 130 form a disulfide. A helical transmembrane segment spans residues 145-163; sequence WLLGIFIAYLIVAVLVVIS. Over 164 to 176 the chain is Cytoplasmic; sequence QPFKAKKRDLFGR.

It belongs to the DsbB family.

Its subcellular location is the cell inner membrane. In terms of biological role, required for disulfide bond formation in some periplasmic proteins. Acts by oxidizing the DsbA protein. The protein is Disulfide bond formation protein B of Escherichia coli O6:K15:H31 (strain 536 / UPEC).